Reading from the N-terminus, the 160-residue chain is Ribosomal RNA large subunit methyltransferase H (160 aa).

Residues Leu76 and Gly108 each coordinate S-adenosyl-L-methionine.

The protein belongs to the RNA methyltransferase RlmH family. As to quaternary structure, homodimer.

It localises to the cytoplasm. The enzyme catalyses pseudouridine(1915) in 23S rRNA + S-adenosyl-L-methionine = N(3)-methylpseudouridine(1915) in 23S rRNA + S-adenosyl-L-homocysteine + H(+). Functionally, specifically methylates the pseudouridine at position 1915 (m3Psi1915) in 23S rRNA. This chain is Ribosomal RNA large subunit methyltransferase H, found in Rhodopseudomonas palustris (strain ATCC BAA-98 / CGA009).